The sequence spans 864 residues: DNA mismatch repair protein MutS (864 aa).

Position 607 to 614 (607 to 614 (GPNMGGKS)) interacts with ATP.

It belongs to the DNA mismatch repair MutS family.

Its function is as follows. This protein is involved in the repair of mismatches in DNA. It is possible that it carries out the mismatch recognition step. This protein has a weak ATPase activity. This chain is DNA mismatch repair protein MutS, found in Neisseria meningitidis serogroup A / serotype 4A (strain DSM 15465 / Z2491).